A 1198-amino-acid polypeptide reads, in one-letter code: Structural polyprotein (1198 aa).

Residues 2-15 (TKKPGGPGKNRAIN) are interaction with host EXOC1. The hydrophobic; homodimerization of capsid protein C stretch occupies residues 37-72 (LLDGRGPVRFVLALITFFKFTALAPTKALLGRWRAV). A propeptide spans 106–127 (GGNESSIMWLASLAIVIACAGA) (ER anchor for the capsid protein C, removed in mature form by serine protease NS3). A helical membrane pass occupies residues 110-130 (SSIMWLASLAIVIACAGAMKL). N-linked (GlcNAc...) asparagine; by host glycosylation is present at Asn142. A run of 2 helical transmembrane segments spans residues 254–274 (WIIRNPGYAFLAAALGWMLGS) and 280–294 (VVFTILLLLVAPAYS). Disulfide bonds link Cys297-Cys324, Cys354-Cys410, Cys354-Cys415, Cys368-Cys399, Cys386-Cys410, and Cys386-Cys415. The segment at 392 to 405 (DRGWGNGCGLFGKG) is fusion peptide. N-linked (GlcNAc...) asparagine; by host glycosylation is present at Asn448. 2 disulfide bridges follow: Cys484-Cys581 and Cys598-Cys629. 2 helical membrane-spanning segments follow: residues 747–767 (FGGMSWITQGLMGALLLWMGV) and 774–794 (IALAFLATGGVLVFLATNVHA). 6 cysteine pairs are disulfide-bonded: Cys798–Cys809, Cys849–Cys937, Cys973–Cys1017, Cys1074–Cys1123, Cys1085–Cys1106, and Cys1107–Cys1110. N-linked (GlcNAc...) asparagine; by host glycosylation is found at Asn924 and Asn1001. The interval 1151 to 1178 (MIDPFSAGPSGDVSGHPGGPSQEVDGQI) is disordered.

Homodimer. Interacts (via N-terminus) with host EXOC1 (via C-terminus); this interaction results in EXOC1 degradation through the proteasome degradation pathway. Interacts with host CAPRIN1; this interaction is involved in the suppression of the integrated stress response. As to quaternary structure, forms heterodimers with envelope protein E in the endoplasmic reticulum and Golgi. In terms of assembly, homodimer; in the endoplasmic reticulum and Golgi. Interacts with protein prM. Interacts with non-structural protein 1. In terms of processing, genome polyprotein: Specific enzymatic cleavages in vivo yield mature proteins. Cleavages in the lumen of endoplasmic reticulum are performed by host signal peptidase, whereas cleavages in the cytoplasmic side are performed by serine protease NS3. Signal cleavage at the 2K-4B site requires a prior NS3 protease-mediated cleavage at the 4A-2K site. Post-translationally, cleaved in post-Golgi vesicles by a host furin, releasing the mature small envelope protein M, and peptide pr. This cleavage is incomplete as up to 30% of viral particles still carry uncleaved prM. N-glycosylated.

The protein localises to the secreted. Its subcellular location is the virion membrane. It localises to the host endoplasmic reticulum membrane. Plays a role in virus budding by binding to the cell membrane and gathering the viral RNA into a nucleocapsid that forms the core of a mature virus particle. During virus entry, may induce genome penetration into the host cytoplasm after hemifusion induced by the surface proteins. Can migrate to the cell nucleus where it modulates host functions. Overcomes the anti-viral effects of host EXOC1 by sequestering and degrading the latter through the proteasome degradation pathway. Inhibits the integrated stress response (ISR) in the infected cell by binding to host CAPRIN1. Functionally, inhibits RNA silencing by interfering with host Dicer. In terms of biological role, prevents premature fusion activity of envelope proteins in trans-Golgi by binding to envelope protein E at pH6.0. After virion release in extracellular space, gets dissociated from E dimers. Its function is as follows. Acts as a chaperone for envelope protein E during intracellular virion assembly by masking and inactivating envelope protein E fusion peptide. prM is the only viral peptide matured by host furin in the trans-Golgi network probably to avoid catastrophic activation of the viral fusion activity in acidic Golgi compartment prior to virion release. prM-E cleavage is inefficient, and many virions are only partially matured. These uncleaved prM would play a role in immune evasion. May play a role in virus budding. Exerts cytotoxic effects by activating a mitochondrial apoptotic pathway through M ectodomain. May display a viroporin activity. Functionally, binds to host cell surface receptor and mediates fusion between viral and cellular membranes. Envelope protein is synthesized in the endoplasmic reticulum in the form of heterodimer with protein prM. They play a role in virion budding in the ER, and the newly formed immature particle is covered with 60 spikes composed of heterodimer between precursor prM and envelope protein E. The virion is transported to the Golgi apparatus where the low pH causes dissociation of PrM-E heterodimers and formation of E homodimers. prM-E cleavage is inefficient, and many virions are only partially matured. These uncleaved prM would play a role in immune evasion. The sequence is that of Structural polyprotein from Ardeidae (herons).